Consider the following 2388-residue polypeptide: Spectrin beta chain, non-erythrocytic 2 (2388 aa).

Position 2 is an N-acetylserine (serine 2). The actin-binding stretch occupies residues 2–278; sequence SSTLSPTDFD…IITYVATYYH (277 aa). Residues serine 6 and serine 31 each carry the phosphoserine modification. 2 consecutive Calponin-homology (CH) domains span residues 57-161 and 176-281; these read AVQK…LRFQ and KSAK…HYFS. Spectrin repeat units follow at residues 306–414, 427–527, 532–639, 642–744, 749–849, and 856–954; these read LVEK…LALR, AARF…RERL, ELQK…RLEE, RLWR…QRLA, LYQF…RALE, and TMLS…KAAL. Serine 959 is subject to Phosphoserine. 11 Spectrin repeats span residues 960-1063, 1066-1169, 1174-1266, 1279-1379, 1384-1485, 1489-1586, 1589-1692, 1696-1797, 1801-1904, 1910-2010, and 2017-2078; these read IQNY…SLGE, RLQD…GRLA, FQGF…NQEA, EQQH…ARSL, RAEL…RRLQ, EQHQ…RLEE, RAQQ…RLQE, LCQL…GQVL, YELQ…QLLL, FRFF…DWLQ, and VFGR…LTAL. At serine 1073 the chain carries Phosphoserine. A Phosphoserine modification is found at serine 1574. The span at 2080–2096 shows a compositional bias: basic and acidic residues; that stretch reads ERENEQKRKREEEERRK. Disordered stretches follow at residues 2080–2112 and 2124–2207; these read EREN…EGSL and DGTQ…HVAT. Positions 2124-2163 are enriched in polar residues; sequence DGTQSKLPPSTQAPSINGVCTDTESSQPLLEQQRLEQSNV. Serine 2169 and serine 2199 each carry phosphoserine. Residues 2218-2328 form the PH domain; it reads QEQMEGTLCR…WLRVVNAAIA (111 aa). The tract at residues 2333–2388 is disordered; sequence ASGEPEEPVVPSASRGLTRAMTMPPVSQPEGSIVLRSKDGREREREKRFSFFKKNK. Threonine 2354 bears the Phosphothreonine mark. Residue serine 2359 is modified to Phosphoserine. Residues 2368–2381 show a composition bias toward basic and acidic residues; sequence RSKDGREREREKRF.

Belongs to the spectrin family. Abundantly transcribed in the brain. Neurons are the predominant cell-type to express the gene. Found abundantly in Purkinje cells.

It localises to the cytoplasm. Its subcellular location is the cytoskeleton. It is found in the cell cortex. Its function is as follows. Probably plays an important role in neuronal membrane skeleton. The polypeptide is Spectrin beta chain, non-erythrocytic 2 (Sptbn2) (Rattus norvegicus (Rat)).